The chain runs to 85 residues: Putative membrane protein insertion efficiency factor (85 aa).

Belongs to the UPF0161 family.

It is found in the cell membrane. Functionally, could be involved in insertion of integral membrane proteins into the membrane. In Buchnera aphidicola subsp. Schizaphis graminum (strain Sg), this protein is Putative membrane protein insertion efficiency factor.